Consider the following 266-residue polypeptide: Putative peptidyl-prolyl cis-trans isomerase NifM (266 aa).

The region spanning 124 to 221 (PEQRLTRHLL…LGWHLLWCEA (98 aa)) is the PpiC domain.

The protein belongs to the PpiC/parvulin rotamase family.

It catalyses the reaction [protein]-peptidylproline (omega=180) = [protein]-peptidylproline (omega=0). Required for the activation and stabilization of the iron-component (NifH) of nitrogenase. Probable PPIase. This Klebsiella oxytoca protein is Putative peptidyl-prolyl cis-trans isomerase NifM (nifM).